Consider the following 305-residue polypeptide: Glycine--tRNA ligase alpha subunit (305 aa).

The protein belongs to the class-II aminoacyl-tRNA synthetase family. In terms of assembly, tetramer of two alpha and two beta subunits.

The protein localises to the cytoplasm. The enzyme catalyses tRNA(Gly) + glycine + ATP = glycyl-tRNA(Gly) + AMP + diphosphate. The protein is Glycine--tRNA ligase alpha subunit of Streptococcus sanguinis (strain SK36).